A 328-amino-acid polypeptide reads, in one-letter code: Endochitinase (328 aa).

Residues 1–26 (MRRHKEVNFVAYLLFSLLVLVSAALA) form the signal peptide. The 42-residue stretch at 27-68 (QNCGSQGGGKACASGQCCSKFGWCGNTNDYCGSGNCQSQCPG) folds into the Chitin-binding type-1 domain. Cystine bridges form between Cys29–Cys44, Cys38–Cys50, Cys43–Cys57, Cys62–Cys66, Cys100–Cys162, Cys174–Cys182, and Cys281–Cys313. Glu144 functions as the Proton donor in the catalytic mechanism. The propeptide at 322 to 328 (ALLVDTL) is removed in mature form.

The protein belongs to the glycosyl hydrolase 19 family. Chitinase class I subfamily.

It is found in the vacuole. It carries out the reaction Random endo-hydrolysis of N-acetyl-beta-D-glucosaminide (1-&gt;4)-beta-linkages in chitin and chitodextrins.. Defense against chitin-containing fungal pathogens. In Solanum tuberosum (Potato), this protein is Endochitinase.